The sequence spans 756 residues: 5-methyltetrahydropteroyltriglutamate--homocysteine methyltransferase (756 aa).

Residues 16-19 and Lys112 each bind 5-methyltetrahydropteroyltri-L-glutamate; that span reads RELK. Residues 432 to 434 and Glu485 contribute to the L-homocysteine site; that span reads IGS. L-methionine-binding positions include 432–434 and Glu485; that span reads IGS. 5-methyltetrahydropteroyltri-L-glutamate-binding positions include 516-517 and Trp562; that span reads RC. An L-homocysteine-binding site is contributed by Asp600. Asp600 serves as a coordination point for L-methionine. Residue Glu606 coordinates 5-methyltetrahydropteroyltri-L-glutamate. Residues His642, Cys644, and Glu666 each contribute to the Zn(2+) site. The active-site Proton donor is the His695. Cys727 is a binding site for Zn(2+).

Belongs to the vitamin-B12 independent methionine synthase family. It depends on Zn(2+) as a cofactor.

The enzyme catalyses 5-methyltetrahydropteroyltri-L-glutamate + L-homocysteine = tetrahydropteroyltri-L-glutamate + L-methionine. Its pathway is amino-acid biosynthesis; L-methionine biosynthesis via de novo pathway; L-methionine from L-homocysteine (MetE route): step 1/1. Its function is as follows. Catalyzes the transfer of a methyl group from 5-methyltetrahydrofolate to homocysteine resulting in methionine formation. The chain is 5-methyltetrahydropteroyltriglutamate--homocysteine methyltransferase from Haemophilus influenzae (strain PittGG).